The chain runs to 351 residues: Anthranilate phosphoribosyltransferase (351 aa).

Residues Gly80, 83–84 (GD), Thr88, 90–93 (NVST), 108–116 (KHGNRSVTS), and Ser120 each bind 5-phospho-alpha-D-ribose 1-diphosphate. Gly80 lines the anthranilate pocket. Ser92 lines the Mg(2+) pocket. Residue Asn111 participates in anthranilate binding. Arg166 contributes to the anthranilate binding site. Residues Asp229 and Glu230 each coordinate Mg(2+).

The protein belongs to the anthranilate phosphoribosyltransferase family. In terms of assembly, homodimer. Requires Mg(2+) as cofactor.

The enzyme catalyses N-(5-phospho-beta-D-ribosyl)anthranilate + diphosphate = 5-phospho-alpha-D-ribose 1-diphosphate + anthranilate. The protein operates within amino-acid biosynthesis; L-tryptophan biosynthesis; L-tryptophan from chorismate: step 2/5. In terms of biological role, catalyzes the transfer of the phosphoribosyl group of 5-phosphorylribose-1-pyrophosphate (PRPP) to anthranilate to yield N-(5'-phosphoribosyl)-anthranilate (PRA). The sequence is that of Anthranilate phosphoribosyltransferase from Prosthecochloris aestuarii (strain DSM 271 / SK 413).